Consider the following 231-residue polypeptide: 5'-methylthioadenosine/S-adenosylhomocysteine nucleosidase (231 aa).

Residue Glu-12 is the Proton acceptor of the active site. Substrate-binding positions include Gly-78, Met-153, and Met-174–Glu-175. The active-site Proton donor is the Asp-198.

It belongs to the PNP/UDP phosphorylase family. MtnN subfamily.

The catalysed reaction is S-adenosyl-L-homocysteine + H2O = S-(5-deoxy-D-ribos-5-yl)-L-homocysteine + adenine. It carries out the reaction S-methyl-5'-thioadenosine + H2O = 5-(methylsulfanyl)-D-ribose + adenine. The enzyme catalyses 5'-deoxyadenosine + H2O = 5-deoxy-D-ribose + adenine. It participates in amino-acid biosynthesis; L-methionine biosynthesis via salvage pathway; S-methyl-5-thio-alpha-D-ribose 1-phosphate from S-methyl-5'-thioadenosine (hydrolase route): step 1/2. In terms of biological role, catalyzes the irreversible cleavage of the glycosidic bond in both 5'-methylthioadenosine (MTA) and S-adenosylhomocysteine (SAH/AdoHcy) to adenine and the corresponding thioribose, 5'-methylthioribose and S-ribosylhomocysteine, respectively. Also cleaves 5'-deoxyadenosine, a toxic by-product of radical S-adenosylmethionine (SAM) enzymes, into 5-deoxyribose and adenine. The chain is 5'-methylthioadenosine/S-adenosylhomocysteine nucleosidase from Bacillus thuringiensis subsp. konkukian (strain 97-27).